We begin with the raw amino-acid sequence, 373 residues long: Cytoplasmic envelopment protein 2 (373 aa).

The interval 1–35 is disordered; sequence MAQLGPRRPLAPPGPPGTLPRPDSRAGARGTRDRV. Positions 9 to 19 are enriched in pro residues; it reads PLAPPGPPGTL. Residues 22–35 are compositionally biased toward basic and acidic residues; that stretch reads PDSRAGARGTRDRV.

This sequence belongs to the herpesviridae cytoplasmic envelopment protein 2 family. As to quaternary structure, interacts with cytoplasmic envelopment protein 3 and with the capsid.

It is found in the virion tegument. The protein resides in the host cytoplasm. Its subcellular location is the host nucleus. Plays a critical role in cytoplasmic virus egress. Participates in the final step of tegumentation and envelope acquisition within the host cytoplasm by directly interacting with the capsid. Upon virion binding to target cell, a signaling cascade is triggered to disrupt the interaction with the capsid, thereby preparing capsid uncoating. The sequence is that of Cytoplasmic envelopment protein 2 (UL16) from Homo sapiens (Human).